We begin with the raw amino-acid sequence, 142 residues long: Hemoglobin subunit alpha (142 aa).

One can recognise a Globin domain in the interval 2 to 142 (VLSDADKTHV…VATVLTSKYR (141 aa)). Ser-4 carries the post-translational modification Phosphoserine. Lys-8 is modified (N6-succinyllysine). Residue Thr-9 is modified to Phosphothreonine. Lys-12 carries the N6-succinyllysine modification. Lys-17 is modified (N6-acetyllysine; alternate). Lys-17 is subject to N6-succinyllysine; alternate. Residue Tyr-25 is modified to Phosphotyrosine. The residue at position 36 (Ser-36) is a Phosphoserine. Lys-41 bears the N6-succinyllysine mark. Ser-50 bears the Phosphoserine mark. His-59 is a binding site for O2. His-88 is a binding site for heme b. A Phosphoserine modification is found at Ser-103. The residue at position 109 (Thr-109) is a Phosphothreonine. Residues Ser-125 and Ser-132 each carry the phosphoserine modification. Thr-135 and Thr-138 each carry phosphothreonine. The residue at position 139 (Ser-139) is a Phosphoserine.

Belongs to the globin family. In terms of assembly, heterotetramer of two alpha chains and two beta chains. In terms of tissue distribution, red blood cells.

Involved in oxygen transport from the lung to the various peripheral tissues. In terms of biological role, hemopressin acts as an antagonist peptide of the cannabinoid receptor CNR1. Hemopressin-binding efficiently blocks cannabinoid receptor CNR1 and subsequent signaling. The polypeptide is Hemoglobin subunit alpha (HBA) (Dasyurus viverrinus (Eastern quoll)).